We begin with the raw amino-acid sequence, 308 residues long: Lipoyl synthase (308 aa).

Residues cysteine 51, cysteine 56, cysteine 62, cysteine 77, cysteine 81, cysteine 84, and serine 290 each coordinate [4Fe-4S] cluster. One can recognise a Radical SAM core domain in the interval 63–279 (WSKRHATFMI…ETIAKSKGFL (217 aa)).

Belongs to the radical SAM superfamily. Lipoyl synthase family. Requires [4Fe-4S] cluster as cofactor.

Its subcellular location is the cytoplasm. The catalysed reaction is [[Fe-S] cluster scaffold protein carrying a second [4Fe-4S](2+) cluster] + N(6)-octanoyl-L-lysyl-[protein] + 2 oxidized [2Fe-2S]-[ferredoxin] + 2 S-adenosyl-L-methionine + 4 H(+) = [[Fe-S] cluster scaffold protein] + N(6)-[(R)-dihydrolipoyl]-L-lysyl-[protein] + 4 Fe(3+) + 2 hydrogen sulfide + 2 5'-deoxyadenosine + 2 L-methionine + 2 reduced [2Fe-2S]-[ferredoxin]. It functions in the pathway protein modification; protein lipoylation via endogenous pathway; protein N(6)-(lipoyl)lysine from octanoyl-[acyl-carrier-protein]: step 2/2. Its function is as follows. Catalyzes the radical-mediated insertion of two sulfur atoms into the C-6 and C-8 positions of the octanoyl moiety bound to the lipoyl domains of lipoate-dependent enzymes, thereby converting the octanoylated domains into lipoylated derivatives. The polypeptide is Lipoyl synthase (Pelagibacter ubique (strain HTCC1062)).